The primary structure comprises 160 residues: Phosphopantetheine adenylyltransferase (160 aa).

A substrate-binding site is contributed by Thr10. Residues 10 to 11 (TF) and His18 contribute to the ATP site. The substrate site is built by Lys42, Met74, and Arg88. ATP contacts are provided by residues 89–91 (GVR), Glu99, and 124–130 (WSYISST).

It belongs to the bacterial CoaD family. Homohexamer. Mg(2+) is required as a cofactor.

The protein localises to the cytoplasm. It carries out the reaction (R)-4'-phosphopantetheine + ATP + H(+) = 3'-dephospho-CoA + diphosphate. Its pathway is cofactor biosynthesis; coenzyme A biosynthesis; CoA from (R)-pantothenate: step 4/5. In terms of biological role, reversibly transfers an adenylyl group from ATP to 4'-phosphopantetheine, yielding dephospho-CoA (dPCoA) and pyrophosphate. The polypeptide is Phosphopantetheine adenylyltransferase (Sodalis glossinidius (strain morsitans)).